The primary structure comprises 338 residues: D-erythrose-4-phosphate dehydrogenase (338 aa).

Residue 11 to 12 (RI) coordinates NAD(+). Residues 153 to 155 (SCT), Arg199, 212 to 213 (TK), and Arg235 each bind substrate. The Nucleophile role is filled by Cys154. Position 317 (Asn317) interacts with NAD(+).

It belongs to the glyceraldehyde-3-phosphate dehydrogenase family. Epd subfamily. As to quaternary structure, homotetramer.

Its subcellular location is the cytoplasm. It carries out the reaction D-erythrose 4-phosphate + NAD(+) + H2O = 4-phospho-D-erythronate + NADH + 2 H(+). It functions in the pathway cofactor biosynthesis; pyridoxine 5'-phosphate biosynthesis; pyridoxine 5'-phosphate from D-erythrose 4-phosphate: step 1/5. In terms of biological role, catalyzes the NAD-dependent conversion of D-erythrose 4-phosphate to 4-phosphoerythronate. The sequence is that of D-erythrose-4-phosphate dehydrogenase from Shewanella piezotolerans (strain WP3 / JCM 13877).